Here is a 366-residue protein sequence, read N- to C-terminus: N-acetyl-6-hydroxytryptophan oxidase ivoB (366 aa).

The first 18 residues, 1 to 18, serve as a signal peptide directing secretion; the sequence is MHLLSSLAALAAAITVAF. N28 and N81 each carry an N-linked (GlcNAc...) asparagine glycan. Cu cation contacts are provided by H87 and H96. N-linked (GlcNAc...) asparagine glycosylation is found at N114 and N121. H291 contributes to the Cu cation binding site. N319 carries N-linked (GlcNAc...) asparagine glycosylation.

The protein belongs to the tyrosinase family. The cofactor is Cu(2+).

Its pathway is pigment biosynthesis. Activity is inhibited by 2,3-dihydroxynaphthalene, phenylhydrazine, diethyl dithiocarbamate and 8-hydroxyquinolene. Its function is as follows. Nonribosomal peptide synthetase; part of the pathway that mediates the biosynthesis of the gray-brown conidiophore pigment. The first step of the pathway is performed by the nonribosomal peptide synthetase ivoA that catalyzes ATP-dependent unidirectional stereoinversion of L-tryptophan to D-tryptophan with complete conversion. While the stereoinversion is catalyzed by the epimerization (E) domain of ivoA, the terminal condensation (C) domain stereoselectively hydrolyzes D-tryptophanyl-S-phosphopantetheine thioester and thus represents a non-canonical C domain function. D-tryptophan is acetylated, probably by an endogenous acetyltransferase. N-acetyltryptophan is further 6-hydroxylated into N-acetyl-6-hydroxytryptophan (AHT) by the cytochrome P450 monooxygenase ivoC. N-acetyl-6-hydroxytryptophan is substrate of the N-acetyl-6-hydroxytryptophan oxidase ivoB to produce the gray-brown conidiophore pigment. In Emericella nidulans (strain FGSC A4 / ATCC 38163 / CBS 112.46 / NRRL 194 / M139) (Aspergillus nidulans), this protein is N-acetyl-6-hydroxytryptophan oxidase ivoB.